A 746-amino-acid polypeptide reads, in one-letter code: Probably inactive copalyl diphosphate synthase 3 (746 aa).

Residues 331 to 334 (DVND) carry the DXDD motif; degenerated motif.

The protein belongs to the terpene synthase family. Tpsc subfamily. Mostly expressed in stems, and, at low levels, in roots and leaves, but barely in flowers.

This Isodon rubescens (Rabdosia rubescens) protein is Probably inactive copalyl diphosphate synthase 3.